Here is a 327-residue protein sequence, read N- to C-terminus: Phenylalanine--tRNA ligase alpha subunit (327 aa).

Mg(2+) is bound at residue Glu-252.

The protein belongs to the class-II aminoacyl-tRNA synthetase family. Phe-tRNA synthetase alpha subunit type 1 subfamily. Tetramer of two alpha and two beta subunits. Mg(2+) is required as a cofactor.

It localises to the cytoplasm. The catalysed reaction is tRNA(Phe) + L-phenylalanine + ATP = L-phenylalanyl-tRNA(Phe) + AMP + diphosphate + H(+). This Aeromonas salmonicida (strain A449) protein is Phenylalanine--tRNA ligase alpha subunit.